The following is a 152-amino-acid chain: Transcriptional regulator MraZ (152 aa).

SpoVT-AbrB domains lie at 5–52 (ATLV…PLPE) and 81–124 (ASEC…DETT).

The protein belongs to the MraZ family. In terms of assembly, forms oligomers.

The protein resides in the cytoplasm. It is found in the nucleoid. Negatively regulates its own expression and that of the subsequent genes in the proximal part of the division and cell wall (dcw) gene cluster. Acts by binding directly to DNA. May also regulate the expression of genes outside the dcw cluster. In Shigella flexneri serotype 5b (strain 8401), this protein is Transcriptional regulator MraZ.